The following is a 385-amino-acid chain: Probable alpha-galactosidase (385 aa).

Positions 1-19 (MMKIAATLLATIALATVNA) are cleaved as a signal peptide. Cystine bridges form between Cys40–Cys72 and Cys119–Cys149. Asp147 serves as the catalytic Nucleophile. 180 to 184 (DWGYE) contributes to the substrate binding site. Residue Asp202 is the Proton donor of the active site.

This sequence belongs to the glycosyl hydrolase 27 family.

It catalyses the reaction Hydrolysis of terminal, non-reducing alpha-D-galactose residues in alpha-D-galactosides, including galactose oligosaccharides, galactomannans and galactolipids.. The sequence is that of Probable alpha-galactosidase (melA) from Dictyostelium discoideum (Social amoeba).